Consider the following 450-residue polypeptide: Glutamyl-tRNA(Gln) amidotransferase subunit A, mitochondrial (450 aa).

Residues lysine 47 and serine 122 each act as charge relay system in the active site. Serine 146 functions as the Acyl-ester intermediate in the catalytic mechanism.

Belongs to the amidase family. GatA subfamily. In terms of assembly, subunit of the heterotrimeric GatFAB amidotransferase (AdT) complex, composed of A, B and F subunits.

Its subcellular location is the mitochondrion. It catalyses the reaction L-glutamyl-tRNA(Gln) + L-glutamine + ATP + H2O = L-glutaminyl-tRNA(Gln) + L-glutamate + ADP + phosphate + H(+). Allows the formation of correctly charged Gln-tRNA(Gln) through the transamidation of misacylated Glu-tRNA(Gln) in the mitochondria. The reaction takes place in the presence of glutamine and ATP through an activated gamma-phospho-Glu-tRNA(Gln). This Candida albicans (strain SC5314 / ATCC MYA-2876) (Yeast) protein is Glutamyl-tRNA(Gln) amidotransferase subunit A, mitochondrial.